The chain runs to 1032 residues: GPI inositol-deacylase (1032 aa).

Asparagine 12 carries an N-linked (GlcNAc...) asparagine glycan. A helical transmembrane segment spans residues 15-35 (ILTLVSFFGLVLFYLTWYLYT). Serine 195 is an active-site residue. Asparagine 520 and asparagine 555 each carry an N-linked (GlcNAc...) asparagine glycan. 2 consecutive transmembrane segments (helical) span residues 703-723 (LATI…QVKH) and 740-760 (ICSP…TPIM). Residue asparagine 784 is glycosylated (N-linked (GlcNAc...) asparagine). 3 consecutive transmembrane segments (helical) span residues 805 to 825 (LWFI…LTFY), 861 to 880 (WANR…PIYM), and 884 to 903 (FAYV…ILVA). Residue asparagine 907 is glycosylated (N-linked (GlcNAc...) asparagine). Residues 916–936 (SLLMLMLWVLPINVPILVVFV) form a helical membrane-spanning segment. Residues asparagine 938 and asparagine 942 are each glycosylated (N-linked (GlcNAc...) asparagine). A run of 2 helical transmembrane segments spans residues 943–963 (WTTP…ILLM) and 985–1005 (AFLA…TYWI).

Belongs to the GPI inositol-deacylase family.

It is found in the endoplasmic reticulum membrane. In terms of biological role, involved in inositol deacylation of GPI-anchored proteins which plays important roles in the quality control and ER-associated degradation of GPI-anchored proteins. The sequence is that of GPI inositol-deacylase (BST1) from Debaryomyces hansenii (strain ATCC 36239 / CBS 767 / BCRC 21394 / JCM 1990 / NBRC 0083 / IGC 2968) (Yeast).